A 194-amino-acid polypeptide reads, in one-letter code: Xanthine phosphoribosyltransferase (194 aa).

Positions 20 and 27 each coordinate xanthine. 128–132 is a binding site for 5-phospho-alpha-D-ribose 1-diphosphate; that stretch reads ANGCA. Lysine 156 lines the xanthine pocket.

Belongs to the purine/pyrimidine phosphoribosyltransferase family. Xpt subfamily. Homodimer.

It localises to the cytoplasm. It carries out the reaction XMP + diphosphate = xanthine + 5-phospho-alpha-D-ribose 1-diphosphate. The protein operates within purine metabolism; XMP biosynthesis via salvage pathway; XMP from xanthine: step 1/1. Converts the preformed base xanthine, a product of nucleic acid breakdown, to xanthosine 5'-monophosphate (XMP), so it can be reused for RNA or DNA synthesis. The protein is Xanthine phosphoribosyltransferase of Lachnoclostridium phytofermentans (strain ATCC 700394 / DSM 18823 / ISDg) (Clostridium phytofermentans).